The chain runs to 410 residues: Putative transporter AmpG 1 (410 aa).

The next 12 helical transmembrane spans lie at 5–25 (LSII…TGNT), 40–60 (IGLL…APIF), 76–96 (LSWI…LSFL), 98–118 (PFDN…FSSM), 141–161 (GIYI…AIYL), 169–189 (EIYK…IVGV), 217–237 (ILKP…LILY), 265–285 (VGKF…GFIM), 290–310 (ILDS…LFII), 320–340 (LLFI…TAYI), 356–378 (YSFF…GYIV), and 383–402 (WQNF…LVLL).

Belongs to the major facilitator superfamily.

The protein resides in the cell inner membrane. The polypeptide is Putative transporter AmpG 1 (ampG1) (Rickettsia bellii (strain RML369-C)).